We begin with the raw amino-acid sequence, 313 residues long: Dimethyladenosine transferase (313 aa).

The segment at 1-22 is disordered; that stretch reads MPKIKSAASGRRRERQQQRGQL. Residues His-37, Leu-39, Gly-64, Glu-85, Asp-113, and Asn-128 each contribute to the S-adenosyl-L-methionine site.

The protein belongs to the class I-like SAM-binding methyltransferase superfamily. rRNA adenine N(6)-methyltransferase family. In terms of assembly, part of the small subunit (SSU) processome, composed of more than 70 proteins and the RNA chaperone small nucleolar RNA (snoRNA) U3.

It localises to the nucleus. The protein resides in the nucleoplasm. The protein localises to the nucleolus. It catalyses the reaction adenosine(1779)/adenosine(1780) in 18S rRNA + 4 S-adenosyl-L-methionine = N(6)-dimethyladenosine(1779)/N(6)-dimethyladenosine(1780) in 18S rRNA + 4 S-adenosyl-L-homocysteine + 4 H(+). Specifically dimethylates two adjacent adenosines in the loop of a conserved hairpin near the 3'-end of 18S rRNA in the 40S particle. Involved in the pre-rRNA processing steps leading to small-subunit rRNA production independently of its RNA-modifying catalytic activity. Part of the small subunit (SSU) processome, first precursor of the small eukaryotic ribosomal subunit. During the assembly of the SSU processome in the nucleolus, many ribosome biogenesis factors, an RNA chaperone and ribosomal proteins associate with the nascent pre-rRNA and work in concert to generate RNA folding, modifications, rearrangements and cleavage as well as targeted degradation of pre-ribosomal RNA by the RNA exosome. The polypeptide is Dimethyladenosine transferase (DIMT1) (Bos taurus (Bovine)).